We begin with the raw amino-acid sequence, 181 residues long: MATPLSQVRQNYHQDCEAAVNRQINLELYASYVYLSMSYYFDRDDVALKNFAKYFLHQSHEEREHAEKLMKLQNQRGGRIFLQDIKKPDRDDWENGLTAMECALHLEKNVNQSLLELHKLATEKNDPHLCDFIETHYLDEQVKAIKELGDHVTNLRKMGAPKYGMAEYLFDKHTLGHSDES.

The region spanning 10–159 (QNYHQDCEAA…DHVTNLRKMG (150 aa)) is the Ferritin-like diiron domain. Positions 27, 62, 65, 107, and 141 each coordinate Fe cation.

This sequence belongs to the ferritin family. In terms of assembly, oligomer of 24 subunits. There are two types of subunits: L (light) chain and H (heavy) chain. The major chain can be light or heavy, depending on the species and tissue type. The functional molecule forms a roughly spherical shell with a diameter of 12 nm and contains a central cavity into which the insoluble mineral iron core is deposited. Expressed in erythroblasts (at protein level). Expressed in heart, liver, spleen, lung, kidney, large intestine, small intestine, muscle, glandular stomach, ovary and oviduct.

It is found in the cytoplasm. Its subcellular location is the lysosome. It localises to the cytoplasmic vesicle. The protein resides in the autophagosome. It catalyses the reaction 4 Fe(2+) + O2 + 4 H(+) = 4 Fe(3+) + 2 H2O. Functionally, stores iron in a soluble, non-toxic, readily available form. Important for iron homeostasis. Has ferroxidase activity. Iron is taken up in the ferrous form and deposited as ferric hydroxides after oxidation. Also plays a role in delivery of iron to cells. Mediates iron uptake in capsule cells of the developing kidney. Delivery to lysosomes is mediated by the cargo receptor NCOA4 for autophagic degradation and release of iron. Inhibits translation of various mRNA species in vitro. Associates with a 35S prosome-like particle that contains non-translated mRNAs in a complex with proteins. May be involved in pre-translational regulation of some mRNA. The polypeptide is Ferritin heavy chain (Anas platyrhynchos (Mallard)).